The following is an 872-amino-acid chain: Alanine--tRNA ligase (872 aa).

Residues His-567, His-571, Cys-669, and His-673 each coordinate Zn(2+).

The protein belongs to the class-II aminoacyl-tRNA synthetase family. Zn(2+) serves as cofactor.

Its subcellular location is the cytoplasm. The enzyme catalyses tRNA(Ala) + L-alanine + ATP = L-alanyl-tRNA(Ala) + AMP + diphosphate. Functionally, catalyzes the attachment of alanine to tRNA(Ala) in a two-step reaction: alanine is first activated by ATP to form Ala-AMP and then transferred to the acceptor end of tRNA(Ala). Also edits incorrectly charged Ser-tRNA(Ala) and Gly-tRNA(Ala) via its editing domain. The chain is Alanine--tRNA ligase from Streptococcus pyogenes serotype M6 (strain ATCC BAA-946 / MGAS10394).